A 463-amino-acid chain; its full sequence is EPD1-interacting receptor-like cytoplasmic serine/threonine-protein kinase (463 aa).

In terms of domain architecture, Protein kinase spans 91–383 (FSSANFLGKG…LTDIPIGPFV (293 aa)). Residues 97–105 (LGKGGFGPV) and lysine 126 contribute to the ATP site. Residues tyrosine 171 and tyrosine 173 each carry the phosphotyrosine modification. Aspartate 221 acts as the Proton acceptor in catalysis.

Belongs to the protein kinase superfamily. Ser/Thr protein kinase family. In terms of assembly, interacts with the V.dahliae elicitor EPD1 (AC G2WWH6). Phosphorylated at Tyr-171 and Tyr-173 in the presence of pathogen-associated molecular patterns (PAMPs); this triggers the expression of pathogenesis-related genes.

It is found in the cell membrane. The catalysed reaction is L-seryl-[protein] + ATP = O-phospho-L-seryl-[protein] + ADP + H(+). It carries out the reaction L-threonyl-[protein] + ATP = O-phospho-L-threonyl-[protein] + ADP + H(+). Required for pathogen-associated molecular pattern (PAMP, e.g. chitin and flg22)-triggered immunity (PTI) involving reactive oxygen species (ROS) accumulation and triggering plant defense, including defense-related gene expression (e.g. PR1 and LOX). Ensures specific recognition of the EPD1 effector of Verticillium dahliae, resulting in a hypersensitive response known as effector-triggered immunity (ETI), characterized by the activation of programmed cell death to limit infection by the pathogen. Priming plants with the incompatible pathogen V.dahliae leads to an increased resistance to both the broad-host-range filamentous pathogen Botrytis cinerea and the semibiotrophic pathogen Phytophthora capsici, as a result of systemic acquired resistance (SAR). This chain is EPD1-interacting receptor-like cytoplasmic serine/threonine-protein kinase, found in Nicotiana benthamiana.